Consider the following 462-residue polypeptide: tRNA-2-methylthio-N(6)-dimethylallyladenosine synthase (462 aa).

One can recognise an MTTase N-terminal domain in the interval 18–138; that stretch reads RKVFVKTYGC…LPNALARVRS (121 aa). C27, C63, C101, C179, C183, and C186 together coordinate [4Fe-4S] cluster. Residues 165 to 397 form the Radical SAM core domain; sequence RKRGVSAFLT…QALLSEQQYA (233 aa). The 63-residue stretch at 400-462 folds into the TRAM domain; that stretch reads DSMIGREMDV…TNSLIAQKLA (63 aa).

Belongs to the methylthiotransferase family. MiaB subfamily. As to quaternary structure, monomer. [4Fe-4S] cluster is required as a cofactor.

The protein localises to the cytoplasm. It carries out the reaction N(6)-dimethylallyladenosine(37) in tRNA + (sulfur carrier)-SH + AH2 + 2 S-adenosyl-L-methionine = 2-methylsulfanyl-N(6)-dimethylallyladenosine(37) in tRNA + (sulfur carrier)-H + 5'-deoxyadenosine + L-methionine + A + S-adenosyl-L-homocysteine + 2 H(+). Its function is as follows. Catalyzes the methylthiolation of N6-(dimethylallyl)adenosine (i(6)A), leading to the formation of 2-methylthio-N6-(dimethylallyl)adenosine (ms(2)i(6)A) at position 37 in tRNAs that read codons beginning with uridine. The polypeptide is tRNA-2-methylthio-N(6)-dimethylallyladenosine synthase (Brucella anthropi (strain ATCC 49188 / DSM 6882 / CCUG 24695 / JCM 21032 / LMG 3331 / NBRC 15819 / NCTC 12168 / Alc 37) (Ochrobactrum anthropi)).